The sequence spans 115 residues: Protein translation factor SUI1 homolog (115 aa).

Belongs to the SUI1 family.

Probably involved in translation. In Sporobolus stapfianus (Ressurection grass), this protein is Protein translation factor SUI1 homolog.